The chain runs to 734 residues: Photosystem I P700 chlorophyll a apoprotein A2 (734 aa).

A run of 8 helical transmembrane segments spans residues Ile-46–Ala-69, Leu-135–Gln-158, Leu-175–Ile-199, Met-273–Tyr-291, Leu-330–Tyr-353, Ala-369–Ile-395, Ala-417–His-439, and Phe-517–Val-535. [4Fe-4S] cluster is bound by residues Cys-559 and Cys-568. Helical transmembrane passes span Ala-575–Trp-596 and Leu-643–Ile-665. His-654, Met-662, and Tyr-670 together coordinate chlorophyll a. Residue Trp-671 coordinates phylloquinone. The helical transmembrane segment at Leu-707 to Ala-727 threads the bilayer.

This sequence belongs to the PsaA/PsaB family. In terms of assembly, the PsaA/B heterodimer binds the P700 chlorophyll special pair and subsequent electron acceptors. PSI consists of a core antenna complex that captures photons, and an electron transfer chain that converts photonic excitation into a charge separation. The eukaryotic PSI reaction center is composed of at least 11 subunits. It depends on P700 is a chlorophyll a/chlorophyll a' dimer, A0 is one or more chlorophyll a, A1 is one or both phylloquinones and FX is a shared 4Fe-4S iron-sulfur center. as a cofactor.

Its subcellular location is the plastid. It is found in the chloroplast thylakoid membrane. It catalyses the reaction reduced [plastocyanin] + hnu + oxidized [2Fe-2S]-[ferredoxin] = oxidized [plastocyanin] + reduced [2Fe-2S]-[ferredoxin]. In terms of biological role, psaA and PsaB bind P700, the primary electron donor of photosystem I (PSI), as well as the electron acceptors A0, A1 and FX. PSI is a plastocyanin-ferredoxin oxidoreductase, converting photonic excitation into a charge separation, which transfers an electron from the donor P700 chlorophyll pair to the spectroscopically characterized acceptors A0, A1, FX, FA and FB in turn. Oxidized P700 is reduced on the lumenal side of the thylakoid membrane by plastocyanin. This chain is Photosystem I P700 chlorophyll a apoprotein A2, found in Daucus carota (Wild carrot).